The primary structure comprises 69 residues: Rubredoxin-1 (69 aa).

In terms of domain architecture, Rubredoxin-like spans 14–69; sequence QASWMCAECGYIYDPAEGNLETNIRPGMPFDKLPDDWSCPVCNHPKNQFTKFISQL. Fe cation contacts are provided by Cys19, Cys22, Cys52, and Cys55.

This sequence belongs to the rubredoxin family. In terms of assembly, monomer. Fe(3+) serves as cofactor.

In terms of biological role, serves as an electron acceptor for pyruvate ferredoxin oxidoreductase (PFOR). This chain is Rubredoxin-1 (rub1), found in Chlorobaculum tepidum (strain ATCC 49652 / DSM 12025 / NBRC 103806 / TLS) (Chlorobium tepidum).